We begin with the raw amino-acid sequence, 689 residues long: Glycine--tRNA ligase beta subunit (689 aa).

Belongs to the class-II aminoacyl-tRNA synthetase family. Tetramer of two alpha and two beta subunits.

It localises to the cytoplasm. It carries out the reaction tRNA(Gly) + glycine + ATP = glycyl-tRNA(Gly) + AMP + diphosphate. This Oenococcus oeni (strain ATCC BAA-331 / PSU-1) protein is Glycine--tRNA ligase beta subunit.